The chain runs to 340 residues: L-threonine 3-dehydrogenase (340 aa).

Zn(2+) is bound at residue Cys38. Catalysis depends on charge relay system residues Thr40 and His43. Residues His63, Glu64, Cys93, Cys96, Cys99, and Cys107 each coordinate Zn(2+). Residues Ile175, Asp195, Arg200, Leu262–Ile264, and Ile286–Tyr287 contribute to the NAD(+) site.

It belongs to the zinc-containing alcohol dehydrogenase family. Homotetramer. The cofactor is Zn(2+).

The protein localises to the cytoplasm. The catalysed reaction is L-threonine + NAD(+) = (2S)-2-amino-3-oxobutanoate + NADH + H(+). It functions in the pathway amino-acid degradation; L-threonine degradation via oxydo-reductase pathway; glycine from L-threonine: step 1/2. Its function is as follows. Catalyzes the NAD(+)-dependent oxidation of L-threonine to 2-amino-3-ketobutyrate. The polypeptide is L-threonine 3-dehydrogenase (Legionella pneumophila subsp. pneumophila (strain Philadelphia 1 / ATCC 33152 / DSM 7513)).